We begin with the raw amino-acid sequence, 451 residues long: Enolase (451 aa).

Glutamine 163 is a (2R)-2-phosphoglycerate binding site. The active-site Proton donor is the glutamate 205. The Mg(2+) site is built by aspartate 258, glutamate 308, and aspartate 335. Residues lysine 360, arginine 389, serine 390, and lysine 411 each contribute to the (2R)-2-phosphoglycerate site. The active-site Proton acceptor is the lysine 360.

This sequence belongs to the enolase family. Requires Mg(2+) as cofactor.

It is found in the cytoplasm. Its subcellular location is the secreted. It localises to the cell surface. It carries out the reaction (2R)-2-phosphoglycerate = phosphoenolpyruvate + H2O. It participates in carbohydrate degradation; glycolysis; pyruvate from D-glyceraldehyde 3-phosphate: step 4/5. In terms of biological role, catalyzes the reversible conversion of 2-phosphoglycerate (2-PG) into phosphoenolpyruvate (PEP). It is essential for the degradation of carbohydrates via glycolysis. In Mycoplasma mycoides subsp. mycoides SC (strain CCUG 32753 / NCTC 10114 / PG1), this protein is Enolase.